The primary structure comprises 153 residues: Xanthine-guanine phosphoribosyltransferase (153 aa).

Residues 37–38 (RG), R69, and 88–96 (DDLVDTGGT) contribute to the 5-phospho-alpha-D-ribose 1-diphosphate site. Position 69 (R69) interacts with GMP. D89 lines the Mg(2+) pocket. D92 and I135 together coordinate guanine. 2 residues coordinate xanthine: D92 and I135. GMP is bound by residues 92-96 (DTGGT) and 134-135 (WI).

The protein belongs to the purine/pyrimidine phosphoribosyltransferase family. XGPT subfamily. Homotetramer. Mg(2+) is required as a cofactor.

Its subcellular location is the cell membrane. The enzyme catalyses GMP + diphosphate = guanine + 5-phospho-alpha-D-ribose 1-diphosphate. It carries out the reaction XMP + diphosphate = xanthine + 5-phospho-alpha-D-ribose 1-diphosphate. The catalysed reaction is IMP + diphosphate = hypoxanthine + 5-phospho-alpha-D-ribose 1-diphosphate. It participates in purine metabolism; GMP biosynthesis via salvage pathway; GMP from guanine: step 1/1. It functions in the pathway purine metabolism; XMP biosynthesis via salvage pathway; XMP from xanthine: step 1/1. In terms of biological role, purine salvage pathway enzyme that catalyzes the transfer of the ribosyl-5-phosphate group from 5-phospho-alpha-D-ribose 1-diphosphate (PRPP) to the N9 position of the 6-oxopurines guanine and xanthine to form the corresponding ribonucleotides GMP (guanosine 5'-monophosphate) and XMP (xanthosine 5'-monophosphate), with the release of PPi. To a lesser extent, also acts on hypoxanthine. This Buchnera aphidicola subsp. Baizongia pistaciae (strain Bp) protein is Xanthine-guanine phosphoribosyltransferase.